The sequence spans 218 residues: ETS domain-containing protein ets-7 (218 aa).

Positions 12–93 (QRLLNFLRGL…KGKDSRYCFL (82 aa)) form a DNA-binding region, ETS. The span at 131–161 (TSNFSLQSSPSSSSNSSSARTMSATSSPTSS) shows a compositional bias: low complexity. Positions 131 to 162 (TSNFSLQSSPSSSSNSSSARTMSATSSPTSSL) are disordered.

This sequence belongs to the ETS family.

It is found in the nucleus. In terms of biological role, probable transcription factor. Involved in responses to oxidative stress. This Caenorhabditis elegans protein is ETS domain-containing protein ets-7.